A 637-amino-acid polypeptide reads, in one-letter code: 1-deoxy-D-xylulose-5-phosphate synthase (637 aa).

Thiamine diphosphate is bound by residues His76 and 117–119; that span reads GHS. Mg(2+) is bound at residue Asp148. Thiamine diphosphate is bound by residues 149–150, Asn177, Tyr294, and Glu381; that span reads GA. Mg(2+) is bound at residue Asn177.

It belongs to the transketolase family. DXPS subfamily. As to quaternary structure, homodimer. The cofactor is Mg(2+). Thiamine diphosphate serves as cofactor.

The enzyme catalyses D-glyceraldehyde 3-phosphate + pyruvate + H(+) = 1-deoxy-D-xylulose 5-phosphate + CO2. It functions in the pathway metabolic intermediate biosynthesis; 1-deoxy-D-xylulose 5-phosphate biosynthesis; 1-deoxy-D-xylulose 5-phosphate from D-glyceraldehyde 3-phosphate and pyruvate: step 1/1. Functionally, catalyzes the acyloin condensation reaction between C atoms 2 and 3 of pyruvate and glyceraldehyde 3-phosphate to yield 1-deoxy-D-xylulose-5-phosphate (DXP). The polypeptide is 1-deoxy-D-xylulose-5-phosphate synthase (Neisseria gonorrhoeae (strain NCCP11945)).